A 233-amino-acid polypeptide reads, in one-letter code: MSTESMIRDVELAEEALPKKTGGPQGSRRCLFLSLFSFLLVAGATTLFCLLHFGVIGPQREEFPKDPSLISPLAQAVRSSSRTPSDKPVAHVVANPQAEGQLQWLNRRANALLANGVELRDNQLVVPSEGLYLIYSQVLFKGQGCPSTHVLLTHTISRIAVSYQTKVNLLSAIKSPCQRETPEGAEAKPWYEPIYLGGVFQLEKGDRLSAEINLPDYLDFAESGQVYFGIIAL.

Topologically, residues 1–35 (MSTESMIRDVELAEEALPKKTGGPQGSRRCLFLSL) are cytoplasmic. S2 carries the post-translational modification Phosphoserine; by CK1. Residues K19 and K20 are each lipidated (N6-myristoyl lysine). The chain crosses the membrane as a helical; Signal-anchor for type II membrane protein span at residues 36-56 (FSFLLVAGATTLFCLLHFGVI). Residues 57-233 (GPQREEFPKD…GQVYFGIIAL (177 aa)) are Extracellular-facing. The O-linked (GalNAc...) serine; in soluble form glycan is linked to S80. The THD domain maps to 88 to 233 (PVAHVVANPQ…GQVYFGIIAL (146 aa)). A disulfide bridge connects residues C145 and C177.

Belongs to the tumor necrosis factor family. As to quaternary structure, homotrimer. Interacts with SPPL2B. The soluble form derives from the membrane form by proteolytic processing. The membrane-bound form is further proteolytically processed by SPPL2A or SPPL2B through regulated intramembrane proteolysis producing TNF intracellular domains (ICD1 and ICD2) released in the cytosol and TNF C-domain 1 and C-domain 2 secreted into the extracellular space. In terms of processing, the membrane form, but not the soluble form, is phosphorylated on serine residues. Dephosphorylation of the membrane form occurs by binding to soluble TNFRSF1A/TNFR1. Post-translationally, O-glycosylated; glycans contain galactose, N-acetylgalactosamine and N-acetylneuraminic acid. The soluble form is demyristoylated by SIRT6, promoting its secretion.

Its subcellular location is the cell membrane. It is found in the membrane. The protein resides in the secreted. Functionally, cytokine that binds to TNFRSF1A/TNFR1 and TNFRSF1B/TNFBR. It is mainly secreted by macrophages and can induce cell death of certain tumor cell lines. It is potent pyrogen causing fever by direct action or by stimulation of interleukin-1 secretion and is implicated in the induction of cachexia, Under certain conditions it can stimulate cell proliferation and induce cell differentiation. Induces insulin resistance in adipocytes via inhibition of insulin-induced IRS1 tyrosine phosphorylation and insulin-induced glucose uptake. Induces GKAP42 protein degradation in adipocytes which is partially responsible for TNF-induced insulin resistance. Plays a role in angiogenesis by inducing VEGF production synergistically with IL1B and IL6. Promotes osteoclastogenesis and therefore mediates bone resorption. The TNF intracellular domain (ICD) form induces IL12 production in dendritic cells. The polypeptide is Tumor necrosis factor (TNF) (Papio sp. (Baboon)).